The following is a 169-amino-acid chain: Transcription antitermination protein NusB (169 aa).

Belongs to the NusB family.

Involved in transcription antitermination. Required for transcription of ribosomal RNA (rRNA) genes. Binds specifically to the boxA antiterminator sequence of the ribosomal RNA (rrn) operons. This Rhodococcus opacus (strain B4) protein is Transcription antitermination protein NusB.